We begin with the raw amino-acid sequence, 267 residues long: Protein isy-1 (267 aa).

Residues 175–204 (LEKLIEEKNIERINKEFAEKQAQKQQTASD) adopt a coiled-coil conformation. Residues 195–221 (QAQKQQTASDAAPENIYKVEEDDDDDL) are disordered.

It belongs to the ISY1 family. In terms of tissue distribution, ubiquitously expressed.

The protein localises to the nucleus. Its function is as follows. Regulates the processing of the mir-60 microRNA (miRNA), which in turn negatively regulates the expression of the transcription factor zip-10. Does not affect the splicing of zip-10. This is Protein isy-1 from Caenorhabditis elegans.